The sequence spans 91 residues: Sm-like protein LSM6A (91 aa).

One can recognise a Sm domain in the interval threonine 14–threonine 86.

It belongs to the snRNP Sm proteins family. In terms of assembly, component of the heptameric LSM1-LSM7 complex that forms a seven-membered ring structure with a donut shape. The LSM subunits are arranged in the order LSM1, LSM2, LSM3, LSM6, LSM5, LSM7 and LSM4. Component of the heptameric LSM2-LSM8 complex that forms a seven-membered ring structure with a donut shape. The LSM subunits are arranged in the order LSM8, LSM2, LSM3, LSM6, LSM5, LSM7 and LSM4. LSM6A subunit interacts only with its two neighboring subunits, LSM3A or LSM3B and LSM5. Expressed in roots, leaves, stems, flowers and siliques.

It is found in the cytoplasm. The protein localises to the nucleus. In terms of biological role, component of LSM protein complexes, which are involved in RNA processing. Component of the cytoplasmic LSM1-LSM7 complex which is involved in mRNA degradation by promoting decapping and leading to accurate 5'-3' mRNA decay. The cytoplasmic LSM1-LSM7 complex regulates developmental gene expression by the decapping of specific development-related transcripts. Component of the nuclear LSM2-LSM8 complex which is involved splicing nuclear mRNAs. LSM2-LSM8 binds directly to the U6 small nuclear RNAs (snRNAs) and is essential for accurate splicing of selected development-related mRNAs through the stabilization of the spliceosomal U6 snRNA. Plays a critical role in the regulation of development-related gene expression. The protein is Sm-like protein LSM6A of Arabidopsis thaliana (Mouse-ear cress).